The sequence spans 240 residues: MKLIITEDYQEMSRVAAHHLLGYMSKTRRVNLAITAGSTPKGMYEYLTTLVKGKPWYDNCYFYNFDEIPFRGKEGEGVTITNLRNLFFTPAGIKEENIQKLTIDNYREHDQKLAREGGLDLVVLGLGADGHFCGNLPNTTHFHEQTVEFPIQGEMVDIVAHGELGGDFSLVPDSYVTMGPKSIMAAKNLLIIVSGAGKAQALKNVLQGPVTEDVPASVLQLHPSLMVIADKAAAAELALG.

Aspartate 66 functions as the Proton acceptor in the catalytic mechanism. Residue aspartate 129 is part of the active site. Histidine 131 serves as the catalytic Proton acceptor.

Belongs to the glucosamine/galactosamine-6-phosphate isomerase family.

This is an uncharacterized protein from Escherichia coli (strain K12).